We begin with the raw amino-acid sequence, 322 residues long: tRNA U34 carboxymethyltransferase (322 aa).

Residues lysine 92, tryptophan 106, lysine 111, glycine 131, 153–155, 181–182, methionine 196, tyrosine 200, and arginine 315 contribute to the carboxy-S-adenosyl-L-methionine site; these read DPT and VE.

This sequence belongs to the class I-like SAM-binding methyltransferase superfamily. CmoB family. In terms of assembly, homotetramer.

It carries out the reaction carboxy-S-adenosyl-L-methionine + 5-hydroxyuridine(34) in tRNA = 5-carboxymethoxyuridine(34) in tRNA + S-adenosyl-L-homocysteine + H(+). Its function is as follows. Catalyzes carboxymethyl transfer from carboxy-S-adenosyl-L-methionine (Cx-SAM) to 5-hydroxyuridine (ho5U) to form 5-carboxymethoxyuridine (cmo5U) at position 34 in tRNAs. The chain is tRNA U34 carboxymethyltransferase from Colwellia psychrerythraea (strain 34H / ATCC BAA-681) (Vibrio psychroerythus).